Reading from the N-terminus, the 329-residue chain is Taste receptor type 2 member 102 (329 aa).

Residues 1–9 are Extracellular-facing; sequence MNMESVLHN. A helical transmembrane segment spans residues 10–30; the sequence is FATVLIYVEFIFGNLSNGFIV. The Cytoplasmic segment spans residues 31 to 47; the sequence is LSNFLDWVIKQKLSLID. Residues 48–68 form a helical membrane-spanning segment; that stretch reads KILLTLAISRITLIWEIYAWF. The Extracellular segment spans residues 69 to 85; sequence KSLYDPSSFLIGIEFQI. Residues 86 to 108 traverse the membrane as a helical segment; sequence IYFSWVLSSHFSLWLATTLSVFY. Residues 109-129 lie on the Cytoplasmic side of the membrane; the sequence is LLRIANCSWQIFLYLKWRLKQ. Residues 130–150 form a helical membrane-spanning segment; the sequence is LIVGMLLGSLVFLLGNLMQSM. Residues 151–181 are Extracellular-facing; the sequence is LEERFYQYGRNTSVNTMSNDLAMWTELIFFN. Asparagine 161 carries N-linked (GlcNAc...) asparagine glycosylation. The chain crosses the membrane as a helical span at residues 182-202; sequence MAMFSVIPFTLALISFLLLIF. At 203–231 the chain is on the cytoplasmic side; sequence SLWKHLQKMQLISRRHRDPSTKAHMNALR. A helical transmembrane segment spans residues 232-252; it reads IMVSFLLLYTMHFLSLLISWI. The Extracellular portion of the chain corresponds to 253 to 262; sequence AQKHQSELAD. A helical membrane pass occupies residues 263–283; that stretch reads IIGMITELMYPSVHSCILILG. Topologically, residues 284-329 are cytoplasmic; it reads NSKLKQTSLCMLRHLRCRLKGENITIAYSNQITSFCVFCVANKSMR.

This sequence belongs to the G-protein coupled receptor T2R family.

It is found in the membrane. Putative taste receptor which may play a role in the perception of bitterness. This Mus musculus (Mouse) protein is Taste receptor type 2 member 102.